Consider the following 217-residue polypeptide: UPF0502 protein VFMJ11_A0613 (217 aa).

The protein belongs to the UPF0502 family.

This is UPF0502 protein VFMJ11_A0613 from Aliivibrio fischeri (strain MJ11) (Vibrio fischeri).